The following is a 483-amino-acid chain: Cysteine proteinase 1, mitochondrial (483 aa).

The transit peptide at 1 to 30 directs the protein to the mitochondrion; sequence MLPTSVSRSLYLKTFRSHLLRAPQIVLKRM. Catalysis depends on residues Cys102, His398, and Asn421. Residue Lys483 is a propeptide, removed in mature form; by autocatalysis.

It belongs to the peptidase C1 family. As to quaternary structure, homohexamer. Binds to nucleic acids. Binds single-stranded DNA and RNA with higher affinity than double-stranded DNA. The N-terminus of isoform Cytoplasmic is blocked.

It localises to the mitochondrion. The protein localises to the cytoplasm. It carries out the reaction Inactivates bleomycin B2 (a cytotoxic glycometallopeptide) by hydrolysis of a carboxyamide bond of beta-aminoalanine, but also shows general aminopeptidase activity. The specificity varies somewhat with source, but amino acid arylamides of Met, Leu and Ala are preferred.. Inhibited by E64, a specific inhibitor of cysteine proteases, N-ethylmaleimide, iodacetamide, and mercury and zinc ions. The normal physiological role of the enzyme is unknown, but it is not essential for the viability of yeast cells. Has aminopeptidase activity, shortening substrate peptides sequentially by 1 amino acid. Has bleomycin hydrolase activity, which can protect the cell from the toxic effects of bleomycin. Has homocysteine-thiolactonase activity, protecting the cell against homocysteine toxicity. Acts as a repressor in the GAL4 regulatory system, but this does not require either the peptidase or nucleic acid-binding activities. This chain is Cysteine proteinase 1, mitochondrial (LAP3), found in Saccharomyces cerevisiae (strain AWRI1631) (Baker's yeast).